A 558-amino-acid polypeptide reads, in one-letter code: ATP-dependent RNA helicase ROK1 (558 aa).

A disordered region spans residues 26–91 (PSAKQQQYEQ…EEAPPLEIQT (66 aa)). 2 stretches are compositionally biased toward basic and acidic residues: residues 34–53 (EQHK…DFFH) and 64–81 (DSTD…KKED). The Q motif signature appears at 120–148 (DMIGRFRLDSKLLSNLLEAEFVEPTAIQC). Positions 151-329 (LPISLSGRDL…HSIMRDPIRV (179 aa)) constitute a Helicase ATP-binding domain. 164–171 (APTGSGKT) is an ATP binding site. The DEAD box signature appears at 276 to 279 (DEAD). One can recognise a Helicase C-terminal domain in the interval 340–504 (TIDQKLVFTG…GFSGWMENMT (165 aa)). A disordered region spans residues 509-558 (NEKKKVKHKEIDRKDISTVPKLVKHKRKQREQMIEASKKRKQEETRNALQ). A compositionally biased stretch (basic and acidic residues) spans 538–558 (REQMIEASKKRKQEETRNALQ).

It belongs to the DEAD box helicase family. DDX52/ROK1 subfamily. Interacts with the U3 snoRNA and is associated with the 90S and 40S pre-ribosomes.

It is found in the nucleus. It localises to the nucleolus. It carries out the reaction ATP + H2O = ADP + phosphate + H(+). In terms of biological role, ATP-dependent RNA helicase involved in 40S ribosomal subunit biogenesis. Required for the processing and cleavage of 35S pre-rRNA at sites A0, A1, and A2, leading to mature 18S rRNA. The chain is ATP-dependent RNA helicase ROK1 (ROK1) from Scheffersomyces stipitis (strain ATCC 58785 / CBS 6054 / NBRC 10063 / NRRL Y-11545) (Yeast).